Consider the following 149-residue polypeptide: MHHTSMGIKMESQIQVFVFVFLWLSGVDGDIVMTQFAGVDGDIVMTQSHKFMSTSVGDRVSITCKASQDVSTTVAWYQQKPGQSPKLLIYSASYRYTGVPDRFTGSGSGTDFTFTISSVQAEDLAVYYCQQHYSTPPTFGGGTKLEIKR.

A signal peptide spans 1–29; it reads MHHTSMGIKMESQIQVFVFVFLWLSGVDG. 2 repeats span residues 26–35 and 38–47; these read GVDGDIVMTQ. A framework-1 region spans residues 42–64; the sequence is DIVMTQSHKFMSTSVGDRVSITC. Positions 65–75 are complementarity-determining-1; that stretch reads KASQDVSTTVA. A framework-2 region spans residues 76–90; sequence WYQQKPGQSPKLLIY. The tract at residues 91 to 97 is complementarity-determining-2; that stretch reads SASYRYT. Positions 98–129 are framework-3; it reads GVPDRFTGSGSGTDFTFTISSVQAEDLAVYYC. Residues 130–138 form a complementarity-determining-3 region; that stretch reads QQHYSTPPT. The interval 139-148 is framework-4; sequence FGGGTKLEIK.

In Mus musculus (Mouse), this protein is Immunoglobulin kappa chain variable 6-17.